The sequence spans 185 residues: dTTP/UTP pyrophosphatase (185 aa).

Asp64 serves as the catalytic Proton acceptor.

The protein belongs to the Maf family. YhdE subfamily. A divalent metal cation is required as a cofactor.

Its subcellular location is the cytoplasm. It catalyses the reaction dTTP + H2O = dTMP + diphosphate + H(+). It carries out the reaction UTP + H2O = UMP + diphosphate + H(+). Functionally, nucleoside triphosphate pyrophosphatase that hydrolyzes dTTP and UTP. May have a dual role in cell division arrest and in preventing the incorporation of modified nucleotides into cellular nucleic acids. The chain is dTTP/UTP pyrophosphatase from Thermococcus gammatolerans (strain DSM 15229 / JCM 11827 / EJ3).